We begin with the raw amino-acid sequence, 259 residues long: Bisphosphoglycerate mutase (259 aa).

Position 2 is an N-acetylserine (serine 2). Residues 10–17 (RHGEGAWN), 23–24 (CS), arginine 62, 89–92 (ERHY), arginine 100, and 116–117 (RR) each bind substrate. The Tele-phosphohistidine intermediate role is filled by histidine 11. Glutamate 89 functions as the Proton donor/acceptor in the catalytic mechanism. Phosphothreonine is present on threonine 122. 189-190 (GN) provides a ligand contact to substrate.

The protein belongs to the phosphoglycerate mutase family. BPG-dependent PGAM subfamily. Homodimer. Expressed in red blood cells.

It carries out the reaction (2R)-3-phospho-glyceroyl phosphate = (2R)-2,3-bisphosphoglycerate + H(+). It catalyses the reaction (2R)-2-phosphoglycerate = (2R)-3-phosphoglycerate. At alkaline pH BPGM favors the synthase reaction; however, at lower pH the phosphatase reaction is dominant. Inhibited by citrate. Plays a major role in regulating hemoglobin oxygen affinity by controlling the levels of its allosteric effector 2,3-bisphosphoglycerate (2,3-BPG). Also exhibits mutase (EC 5.4.2.11) activity. In Oryctolagus cuniculus (Rabbit), this protein is Bisphosphoglycerate mutase (BPGM).